We begin with the raw amino-acid sequence, 105 residues long: Large ribosomal subunit protein bL21c (105 aa).

Belongs to the bacterial ribosomal protein bL21 family. Part of the 50S ribosomal subunit.

Its subcellular location is the plastid. It is found in the chloroplast. This protein binds to 23S rRNA. The polypeptide is Large ribosomal subunit protein bL21c (Phaeodactylum tricornutum (strain CCAP 1055/1)).